The primary structure comprises 343 residues: MSYTLGQLAAKVQGVVKGDADLVIDKLGSLENATSKELSFLANSKYQSLLGTTSAGAVLVKTDELAQLVDNAIVVSNPYLAFAQISHLFVPTTHSWSGIHQSAVVSPKATIAENVVVGPNAVIDDDVLIAEDCVIGAGSVLSRGVKIGKGSRIYSNVTLYHDVEVGEACIIHSGTVIGADGFGFAPNDGFWEKIDQLGSVIIGNNVEIGANSTIDRGAIENTQIGNGVKIDNQVQIAHNVVIGDNTAIAGCVGIAGSVKIGASCTISGGAGIAGHLSIVDHTHITGMTMITKSIDEAGSYSSGMGMEPTGKWRRTAARIRRIDEMAKQISSLGQQIKKLSDKG.

H238 serves as the catalytic Proton acceptor.

It belongs to the transferase hexapeptide repeat family. LpxD subfamily. In terms of assembly, homotrimer.

It carries out the reaction a UDP-3-O-[(3R)-3-hydroxyacyl]-alpha-D-glucosamine + a (3R)-hydroxyacyl-[ACP] = a UDP-2-N,3-O-bis[(3R)-3-hydroxyacyl]-alpha-D-glucosamine + holo-[ACP] + H(+). The protein operates within bacterial outer membrane biogenesis; LPS lipid A biosynthesis. In terms of biological role, catalyzes the N-acylation of UDP-3-O-acylglucosamine using 3-hydroxyacyl-ACP as the acyl donor. Is involved in the biosynthesis of lipid A, a phosphorylated glycolipid that anchors the lipopolysaccharide to the outer membrane of the cell. The chain is UDP-3-O-acylglucosamine N-acyltransferase from Marinomonas sp. (strain MWYL1).